Here is a 203-residue protein sequence, read N- to C-terminus: Large ribosomal subunit protein bL25 (203 aa).

This sequence belongs to the bacterial ribosomal protein bL25 family. CTC subfamily. In terms of assembly, part of the 50S ribosomal subunit; part of the 5S rRNA/L5/L18/L25 subcomplex. Contacts the 5S rRNA. Binds to the 5S rRNA independently of L5 and L18.

Functionally, this is one of the proteins that binds to the 5S RNA in the ribosome where it forms part of the central protuberance. The protein is Large ribosomal subunit protein bL25 of Wolbachia pipientis wMel.